A 163-amino-acid chain; its full sequence is Probable ribosome biogenesis protein RLP24 (163 aa).

It belongs to the eukaryotic ribosomal protein eL24 family. In terms of assembly, associated with nucleolar and cytoplasmic pre-60S particles. At the end of biogenesis it dissociates from cytoplasmic pre-60S particles and is likely to be exchanged for its ribosomal homolog, RPL24.

The protein resides in the nucleus. Its subcellular location is the nucleolus. Its function is as follows. Involved in the biogenesis of the 60S ribosomal subunit. Ensures the docking of GTPBP4/NOG1 to pre-60S particles. The polypeptide is Probable ribosome biogenesis protein RLP24 (RSL24D1) (Homo sapiens (Human)).